The following is a 195-amino-acid chain: Probable nicotinate-nucleotide adenylyltransferase (195 aa).

It belongs to the NadD family.

It catalyses the reaction nicotinate beta-D-ribonucleotide + ATP + H(+) = deamido-NAD(+) + diphosphate. It participates in cofactor biosynthesis; NAD(+) biosynthesis; deamido-NAD(+) from nicotinate D-ribonucleotide: step 1/1. In terms of biological role, catalyzes the reversible adenylation of nicotinate mononucleotide (NaMN) to nicotinic acid adenine dinucleotide (NaAD). This is Probable nicotinate-nucleotide adenylyltransferase from Chlorobaculum parvum (strain DSM 263 / NCIMB 8327) (Chlorobium vibrioforme subsp. thiosulfatophilum).